We begin with the raw amino-acid sequence, 366 residues long: Hydroxyproline O-arabinosyltransferase 1 (366 aa).

A helical; Signal-anchor transmembrane segment spans residues 6–26 (TLFYPLLITLSVALITYNIII).

As to expression, ubiquitous.

Its subcellular location is the golgi apparatus. The protein resides in the cis-Golgi network membrane. The catalysed reaction is trans-4-hydroxy-L-prolyl-[protein] + UDP-beta-L-arabinofuranose = O-(beta-L-arabinofuranosyl)-trans-4-hydroxy-L-prolyl-[protein] + UDP + H(+). Its function is as follows. Glycosyltransferase involved in the O-arabinosylation of several proteins including extensins and small signaling peptides. Catalyzes the transfer of the initial L-arabinose to the hydroxyl group of Hyp residues. Contributes redundantly with HPAT2 and HPAT3 to arabinosylation of EXT3. The sequence is that of Hydroxyproline O-arabinosyltransferase 1 from Arabidopsis thaliana (Mouse-ear cress).